The following is a 1167-amino-acid chain: Outer membrane protein SlpA (1167 aa).

The first 22 residues, 1-22, serve as a signal peptide directing secretion; it reads MKKSLIALTTALSFGLAAAQTA. Topologically, residues 23 to 254 are periplasmic; sequence APVSAPQVPA…RIAALERNAF (232 aa). In terms of domain architecture, SLH spans 29 to 92; sequence QVPALTDVPA…DQMRDGETPA (64 aa). The chain crosses the membrane as a beta stranded span at residues 255 to 268; sequence SVKPSLTIGYSVSR. Residues 269–377 are Extracellular-facing; sequence TSRNFDVDRL…RNGFGFNNLA (109 aa). Cu(2+)-binding residues include D274, D276, R305, F308, D310, and E381. The chain crosses the membrane as a beta stranded span at residues 378–403; the sequence is RYKEGSTDIGISLGFDTSGQFSQVTS. The Periplasmic segment spans residues 404 to 416; it reads GTGGSLFSTAGRL. A beta stranded membrane pass occupies residues 417–428; it reads QVNQIDLNFGLV. Residues 429 to 471 are Extracellular-facing; it reads TGLPSDAYVDTNGNGKKDDGEATGRGTYLGSGGTAAILRDPAG. Residues D438, N442, K444, D446, and E449 each coordinate Fe(3+). A beta stranded membrane pass occupies residues 472 to 490; sequence NVYRPVFFRFKNATTQFSV. Residues 491 to 494 are Periplasmic-facing; it reads GNNP. The chain crosses the membrane as a beta stranded span at residues 495-500; sequence VIVTLG. Residues 501–519 are Extracellular-facing; the sequence is QQQKFYFSDYVFDNNYDGR. Cu(2+) contacts are provided by D513 and N515. The chain crosses the membrane as a beta stranded span at residues 520–528; the sequence is GDGFTVTVD. Residues 529-540 are Periplasmic-facing; sequence GSNVPVIGAWKP. A beta stranded transmembrane segment spans residues 541 to 549; that stretch reads QIKGVYGSR. Cu(2+) is bound by residues R549, G551, D553, and G559. Topologically, residues 550–561 are extracellular; that stretch reads SGLDGTAEAGYG. Residues 562–571 traverse the membrane as a beta stranded segment; sequence VYYRGVRAQI. The Periplasmic portion of the chain corresponds to 572–577; sequence TPVGTL. Residues 578 to 588 form a beta stranded membrane-spanning segment; the sequence is TAGIHYAQEGR. Residues 589-601 lie on the Extracellular side of the membrane; that stretch reads DMFGAAQNTTSTP. Residues 602 to 615 form a beta stranded membrane-spanning segment; the sequence is SDVTTYGADLHGKA. The Periplasmic portion of the chain corresponds to 616–617; the sequence is FG. Residues 618–630 form a beta stranded membrane-spanning segment; sequence VELHSEYATSRVR. S622 contributes to the deinoxanthin binding site. The Extracellular segment spans residues 631–638; that stretch reads PNTANAAV. The chain crosses the membrane as a beta stranded span at residues 639–649; that stretch reads QTSNAFYARVA. At 650-670 the chain is on the periplasmic side; that stretch reads TRKDNLAFDLNTPAAKFGNDT. A beta stranded transmembrane segment spans residues 671-682; it reads FGVSLYDLNYRK. Residues 683 to 753 lie on the Extracellular side of the membrane; sequence IDAGYNNVAG…GTVVATNTKI (71 aa). Residue G716 participates in Cu(2+) binding. A beta stranded membrane pass occupies residues 754–766; sequence GQMGFGVKAAANL. Over 767-768 the chain is Periplasmic; the sequence is GP. A beta stranded membrane pass occupies residues 769–779; it reads VAIGGYYDTST. Residues 780–788 are Extracellular-facing; sequence GANGDNANR. Residues 789-798 traverse the membrane as a beta stranded segment; sequence MTEAGGSAKV. The Periplasmic portion of the chain corresponds to 799-802; it reads AYSI. Residues 803 to 814 form a beta stranded membrane-spanning segment; sequence FSLRGTYNTLDS. The Extracellular portion of the chain corresponds to 815–831; the sequence is NRPQIYRDAAGTQIIGD. The beta stranded transmembrane segment at 832-843 threads the bilayer; the sequence is AKVRRYAVQADV. Over 844–848 the chain is Periplasmic; that stretch reads TPGLG. A beta stranded membrane pass occupies residues 849-860; that stretch reads LFVGAYYRDVNV. The Extracellular portion of the chain corresponds to 861–931; the sequence is NGVRSTTDRG…DQSRTATCFT (71 aa). A beta stranded membrane pass occupies residues 932-940; that stretch reads SYGVEAGHA. At 941–949 the chain is on the periplasmic side; it reads GDNANALVK. The chain crosses the membrane as a beta stranded span at residues 950–960; the sequence is DLFFRVGYSRV. The Extracellular portion of the chain corresponds to 961 to 976; that stretch reads YVPTTATATTGDFSGS. A beta stranded membrane pass occupies residues 977–988; sequence VTYGDARYDRKV. The Periplasmic portion of the chain corresponds to 989 to 990; the sequence is GV. The chain crosses the membrane as a beta stranded span at residues 991–1002; the sequence is ANVRLAGSFSTT. Residues 1003-1014 lie on the Extracellular side of the membrane; that stretch reads NTQLDSRPAGTR. Residues 1015 to 1023 form a beta stranded membrane-spanning segment; it reads GAVGLIVRT. Over 1024-1032 the chain is Periplasmic; that stretch reads DPLENVPFR. Residues 1033–1046 traverse the membrane as a beta stranded segment; sequence PQFNGQVGYYTADN. The Extracellular segment spans residues 1047-1052; that stretch reads RVAAGN. The beta stranded transmembrane segment at 1053-1066 threads the bilayer; it reads YNANATKYGAGVVL. The Periplasmic segment spans residues 1067-1073; it reads NDFLLPQ. The chain crosses the membrane as a beta stranded span at residues 1074 to 1086; the sequence is TKIGVRYDGYMAQ. Topologically, residues 1087 to 1108 are extracellular; sequence NRQYTPFDGDGTQGYFSDANNN. A beta stranded transmembrane segment spans residues 1109 to 1122; the sequence is RRTNLNGVYVEGAY. Residues 1123-1124 lie on the Periplasmic side of the membrane; that stretch reads QD. The chain crosses the membrane as a beta stranded span at residues 1125 to 1138; that stretch reads LIFSYGTYTLSQKD. The Extracellular portion of the chain corresponds to 1139-1153; that stretch reads LNGVEYGSGINNGQP. Residues 1154–1166 form a beta stranded membrane-spanning segment; it reads ARGQTFKISYKVN. Position 1167 (F1167) is a topological domain, periplasmic.

In terms of assembly, homotrimer. Part of a heterooligomeric complex resulting in the main assembly named S-layer deinoxanthin-binding complex (SDBC) which is composed of six different subunits, namely SlpA, DR_2310, DR_0505, DR_A0283, DR_A0282, and DR_A0281.

It localises to the cell envelope. The protein resides in the cell outer membrane. It carries out the reaction L-arginine(in) = L-arginine(out). It catalyses the reaction L-lysine(in) = L-lysine(out). The catalysed reaction is L-glutamate(out) = L-glutamate(in). Plays an important role in the structural organization and integrity of the cell envelope, bridging the outer membrane to the peptidoglyan layer. Is a highly abundant molecule in the D.radiodurans cell envelope but is not a fundamental component of the S-layer. Binds the carotenoid deinoxanthin, a strong protective antioxidant specific of this bacterium, and could be part of the first lane of defense against UV radiation, especially under desiccation. Appears to be a nonselective channel. Is able to transport charged amino acids such as Lys, Arg and Glu; the large dimension of the pore points toward the physiological importance of the SDBC complex in assisting and allowing the exchange of substances, including nutrients, with the surrounding environment. The protein is Outer membrane protein SlpA of Deinococcus radiodurans (strain ATCC 13939 / DSM 20539 / JCM 16871 / CCUG 27074 / LMG 4051 / NBRC 15346 / NCIMB 9279 / VKM B-1422 / R1).